A 295-amino-acid polypeptide reads, in one-letter code: Bifunctional protein FolD (295 aa).

NADP(+) contacts are provided by residues 169–171 (GRG), T196, and V237.

The protein belongs to the tetrahydrofolate dehydrogenase/cyclohydrolase family. Homodimer.

The catalysed reaction is (6R)-5,10-methylene-5,6,7,8-tetrahydrofolate + NADP(+) = (6R)-5,10-methenyltetrahydrofolate + NADPH. It carries out the reaction (6R)-5,10-methenyltetrahydrofolate + H2O = (6R)-10-formyltetrahydrofolate + H(+). It functions in the pathway one-carbon metabolism; tetrahydrofolate interconversion. Functionally, catalyzes the oxidation of 5,10-methylenetetrahydrofolate to 5,10-methenyltetrahydrofolate and then the hydrolysis of 5,10-methenyltetrahydrofolate to 10-formyltetrahydrofolate. In Kineococcus radiotolerans (strain ATCC BAA-149 / DSM 14245 / SRS30216), this protein is Bifunctional protein FolD.